The chain runs to 156 residues: D-aminoacyl-tRNA deacylase (156 aa).

Residues 137–138 (GP) carry the Gly-cisPro motif, important for rejection of L-amino acids motif.

The protein belongs to the DTD family. Homodimer.

The protein localises to the cytoplasm. It carries out the reaction glycyl-tRNA(Ala) + H2O = tRNA(Ala) + glycine + H(+). The catalysed reaction is a D-aminoacyl-tRNA + H2O = a tRNA + a D-alpha-amino acid + H(+). Functionally, an aminoacyl-tRNA editing enzyme that deacylates mischarged D-aminoacyl-tRNAs. Also deacylates mischarged glycyl-tRNA(Ala), protecting cells against glycine mischarging by AlaRS. Acts via tRNA-based rather than protein-based catalysis; rejects L-amino acids rather than detecting D-amino acids in the active site. By recycling D-aminoacyl-tRNA to D-amino acids and free tRNA molecules, this enzyme counteracts the toxicity associated with the formation of D-aminoacyl-tRNA entities in vivo and helps enforce protein L-homochirality. The sequence is that of D-aminoacyl-tRNA deacylase from Ruegeria sp. (strain TM1040) (Silicibacter sp.).